Consider the following 387-residue polypeptide: Succinyl-diaminopimelate desuccinylase (387 aa).

Histidine 73 contributes to the Zn(2+) binding site. The active site involves aspartate 75. Aspartate 106 contributes to the Zn(2+) binding site. Glutamate 141 serves as the catalytic Proton acceptor. Glutamate 142, glutamate 170, and histidine 359 together coordinate Zn(2+).

It belongs to the peptidase M20A family. DapE subfamily. In terms of assembly, homodimer. The cofactor is Zn(2+). It depends on Co(2+) as a cofactor.

It catalyses the reaction N-succinyl-(2S,6S)-2,6-diaminopimelate + H2O = (2S,6S)-2,6-diaminopimelate + succinate. It functions in the pathway amino-acid biosynthesis; L-lysine biosynthesis via DAP pathway; LL-2,6-diaminopimelate from (S)-tetrahydrodipicolinate (succinylase route): step 3/3. Functionally, catalyzes the hydrolysis of N-succinyl-L,L-diaminopimelic acid (SDAP), forming succinate and LL-2,6-diaminopimelate (DAP), an intermediate involved in the bacterial biosynthesis of lysine and meso-diaminopimelic acid, an essential component of bacterial cell walls. In Methylorubrum populi (strain ATCC BAA-705 / NCIMB 13946 / BJ001) (Methylobacterium populi), this protein is Succinyl-diaminopimelate desuccinylase.